The following is a 438-amino-acid chain: Coenzyme A disulfide reductase (438 aa).

8-33 serves as a coordination point for FAD; sequence GAVAGGATCASQIRRLDKESEIIVFE. Residues threonine 15, glutamine 19, arginine 22, serine 39, and asparagine 42 each coordinate substrate. The Nucleophile role is filled by cysteine 43. Cysteine 43 (redox-active) is an active-site residue. Lysine 71 provides a ligand contact to substrate. 151–166 serves as a coordination point for NADP(+); the sequence is ALVVGAGYISLEVLEN. 267-277 contacts FAD; it reads TNIPNIYALGD. A substrate-binding site is contributed by histidine 299. Position 419 (tyrosine 419) interacts with FAD. Residue lysine 427 participates in substrate binding.

It belongs to the class-III pyridine nucleotide-disulfide oxidoreductase family. In terms of assembly, homodimer. FAD serves as cofactor.

The enzyme catalyses NADP(+) + 2 CoA = CoA-disulfide + NADPH + H(+). In terms of biological role, catalyzes specifically the NADPH-dependent reduction of coenzyme A disulfide. This is Coenzyme A disulfide reductase from Staphylococcus epidermidis (strain ATCC 35984 / DSM 28319 / BCRC 17069 / CCUG 31568 / BM 3577 / RP62A).